Reading from the N-terminus, the 283-residue chain is Protease HtpX (283 aa).

A run of 2 helical transmembrane segments spans residues 4 to 24 (ILLF…ILSV) and 33 to 53 (GGIL…SLFL). H139 is a Zn(2+) binding site. Residue E140 is part of the active site. A Zn(2+)-binding site is contributed by H143. The next 2 membrane-spanning stretches (helical) occupy residues 147–167 (GDMV…IFLS) and 190–210 (IYFL…SIIA). Residue E218 coordinates Zn(2+).

The protein belongs to the peptidase M48B family. Requires Zn(2+) as cofactor.

It localises to the cell inner membrane. The protein is Protease HtpX of Haemophilus influenzae (strain PittGG).